The primary structure comprises 418 residues: Serine hydroxymethyltransferase (418 aa).

(6S)-5,6,7,8-tetrahydrofolate contacts are provided by residues Leu-121 and 125–127 (GHL). Lys-230 is modified (N6-(pyridoxal phosphate)lysine). 356-358 (SPF) contributes to the (6S)-5,6,7,8-tetrahydrofolate binding site.

Belongs to the SHMT family. Homodimer. It depends on pyridoxal 5'-phosphate as a cofactor.

It localises to the cytoplasm. It carries out the reaction (6R)-5,10-methylene-5,6,7,8-tetrahydrofolate + glycine + H2O = (6S)-5,6,7,8-tetrahydrofolate + L-serine. Its pathway is one-carbon metabolism; tetrahydrofolate interconversion. It participates in amino-acid biosynthesis; glycine biosynthesis; glycine from L-serine: step 1/1. Its function is as follows. Catalyzes the reversible interconversion of serine and glycine with tetrahydrofolate (THF) serving as the one-carbon carrier. This reaction serves as the major source of one-carbon groups required for the biosynthesis of purines, thymidylate, methionine, and other important biomolecules. Also exhibits THF-independent aldolase activity toward beta-hydroxyamino acids, producing glycine and aldehydes, via a retro-aldol mechanism. This is Serine hydroxymethyltransferase from Shewanella halifaxensis (strain HAW-EB4).